The primary structure comprises 231 residues: Ion-translocating oxidoreductase complex subunit E (231 aa).

The next 6 membrane-spanning stretches (helical) occupy residues 18–38 (ALVQ…ATNA), 39–59 (LGLG…ISTL), 63–83 (TPSE…VSAV), 86–106 (LINA…PLIV), 125–145 (ALSA…MFVL), and 182–202 (PFLL…MLAG).

The protein belongs to the NqrDE/RnfAE family. The complex is composed of six subunits: RsxA, RsxB, RsxC, RsxD, RsxE and RsxG.

It localises to the cell inner membrane. Functionally, part of a membrane-bound complex that couples electron transfer with translocation of ions across the membrane. Required to maintain the reduced state of SoxR. The chain is Ion-translocating oxidoreductase complex subunit E from Escherichia coli O6:K15:H31 (strain 536 / UPEC).